A 202-amino-acid polypeptide reads, in one-letter code: Outer-membrane lipoprotein carrier protein (202 aa).

Residues methionine 1–serine 18 form the signal peptide.

Belongs to the LolA family. Monomer.

Its subcellular location is the periplasm. In terms of biological role, participates in the translocation of lipoproteins from the inner membrane to the outer membrane. Only forms a complex with a lipoprotein if the residue after the N-terminal Cys is not an aspartate (The Asp acts as a targeting signal to indicate that the lipoprotein should stay in the inner membrane). The polypeptide is Outer-membrane lipoprotein carrier protein (Legionella pneumophila (strain Corby)).